Consider the following 426-residue polypeptide: Stationary phase-inducible protein CsiE (426 aa).

PRD domains are found at residues 120–225 (ARNF…DPLR) and 229–336 (QRDR…ENDL).

This Escherichia coli (strain K12) protein is Stationary phase-inducible protein CsiE (csiE).